A 301-amino-acid polypeptide reads, in one-letter code: Homoserine O-acetyltransferase (301 aa).

Residue Cys-142 is the Acyl-thioester intermediate of the active site. 2 residues coordinate substrate: Lys-163 and Ser-192. Residue His-235 is the Proton acceptor of the active site. Glu-237 is a catalytic residue. Arg-249 is a binding site for substrate.

The protein belongs to the MetA family. As to quaternary structure, homodimer.

It localises to the cytoplasm. It carries out the reaction L-homoserine + acetyl-CoA = O-acetyl-L-homoserine + CoA. Its pathway is amino-acid biosynthesis; L-methionine biosynthesis via de novo pathway; O-acetyl-L-homoserine from L-homoserine: step 1/1. Functionally, transfers an acetyl group from acetyl-CoA to L-homoserine, forming acetyl-L-homoserine. Utilizes a ping-pong kinetic mechanism in which the acetyl group of acetyl-CoA is initially transferred to the enzyme to form an acetyl-enzyme intermediate before subsequent transfer to homoserine to form the final product, O-acetylhomoserine. Cannot use succinyl-CoA as the acyl donor. This is Homoserine O-acetyltransferase from Bacillus cereus (strain ATCC 10987 / NRS 248).